The chain runs to 454 residues: Guanine deaminase (454 aa).

The Zn(2+) site is built by histidine 82 and histidine 84. Substrate-binding positions include 84 to 87 (HASQ), 213 to 214 (RF), 240 to 243 (HISE), and aspartate 330. Residues histidine 240 and aspartate 330 each coordinate Zn(2+). A Phosphoserine modification is found at serine 453.

The protein belongs to the metallo-dependent hydrolases superfamily. ATZ/TRZ family. As to quaternary structure, homodimer. Requires Zn(2+) as cofactor.

The enzyme catalyses guanine + H2O + H(+) = xanthine + NH4(+). It participates in purine metabolism; guanine degradation; xanthine from guanine: step 1/1. Its function is as follows. Catalyzes the hydrolytic deamination of guanine, producing xanthine and ammonia. This Homo sapiens (Human) protein is Guanine deaminase.